A 906-amino-acid polypeptide reads, in one-letter code: Protein translocase subunit SecA (906 aa).

Residues Gln-87, Gly-105–Thr-109, and Asp-507 contribute to the ATP site. Over residues Arg-553 to Leu-563 the composition is skewed to basic and acidic residues. Disordered regions lie at residues Arg-553 to Ser-576 and Leu-854 to Ala-906. Zn(2+) contacts are provided by Cys-890, Cys-892, Cys-901, and His-902. Positions Lys-896–Ala-906 are enriched in basic residues.

It belongs to the SecA family. As to quaternary structure, monomer and homodimer. Part of the essential Sec protein translocation apparatus which comprises SecA, SecYEG and auxiliary proteins SecDF-YajC and YidC. It depends on Zn(2+) as a cofactor.

Its subcellular location is the cell inner membrane. The protein localises to the cytoplasm. The catalysed reaction is ATP + H2O + cellular proteinSide 1 = ADP + phosphate + cellular proteinSide 2.. In terms of biological role, part of the Sec protein translocase complex. Interacts with the SecYEG preprotein conducting channel. Has a central role in coupling the hydrolysis of ATP to the transfer of proteins into and across the cell membrane, serving both as a receptor for the preprotein-SecB complex and as an ATP-driven molecular motor driving the stepwise translocation of polypeptide chains across the membrane. The sequence is that of Protein translocase subunit SecA from Methylococcus capsulatus (strain ATCC 33009 / NCIMB 11132 / Bath).